Reading from the N-terminus, the 123-residue chain is MPTINQLIRIERKAVLKRKKTPALQACPQRRGVCTRVYTTTPKKPNSALRKVARVRLTNGIEVTAYIPGEGHNLQEHSVVIIRGGRVKDLPGVRYHIVRGTLDTSGVADRRKSRSKYGAKRPK.

Position 89 is a 3-methylthioaspartic acid (aspartate 89).

It belongs to the universal ribosomal protein uS12 family. As to quaternary structure, part of the 30S ribosomal subunit. Contacts proteins S8 and S17. May interact with IF1 in the 30S initiation complex.

Its function is as follows. With S4 and S5 plays an important role in translational accuracy. Functionally, interacts with and stabilizes bases of the 16S rRNA that are involved in tRNA selection in the A site and with the mRNA backbone. Located at the interface of the 30S and 50S subunits, it traverses the body of the 30S subunit contacting proteins on the other side and probably holding the rRNA structure together. The combined cluster of proteins S8, S12 and S17 appears to hold together the shoulder and platform of the 30S subunit. This Desulfovibrio desulfuricans (strain ATCC 27774 / DSM 6949 / MB) protein is Small ribosomal subunit protein uS12.